The following is a 198-amino-acid chain: Ribonuclease HII (198 aa).

In terms of domain architecture, RNase H type-2 spans 10-198; it reads HLVAGVDEVG…PVKRALGLVS (189 aa). A divalent metal cation contacts are provided by Asp-16, Glu-17, and Asp-108.

It belongs to the RNase HII family. Requires Mn(2+) as cofactor. Mg(2+) serves as cofactor.

The protein localises to the cytoplasm. The enzyme catalyses Endonucleolytic cleavage to 5'-phosphomonoester.. Its function is as follows. Endonuclease that specifically degrades the RNA of RNA-DNA hybrids. In Salmonella paratyphi A (strain AKU_12601), this protein is Ribonuclease HII.